Consider the following 535-residue polypeptide: Potassium channel subfamily K member 10 (535 aa).

Over 1–68 (MYFSYIGYFF…GLQTVMKWKT (68 aa)) the chain is Cytoplasmic. Residues 69 to 89 (VVAIFVVVVVYLVTGGLVFRA) form a helical membrane-spanning segment. The pore-forming intramembrane region spans 151–177 (LGSAFFFAGTVITTIGYGNIAPSTEGG). The K(+) site is built by threonine 164, isoleucine 165, glycine 166, and tyrosine 167. The tract at residues 164–169 (TIGYGN) is selectivity filter 1. The chain crosses the membrane as a helical span at residues 179–199 (IFCILYAIFGIPLFGFLLAGI). Topologically, residues 200 to 230 (GDQLGTIFGKSIARVEKVFRKKQVSQTKIRV) are cytoplasmic. Residues 231–251 (ISTILFILAGCIVFVTIPAVI) form a helical membrane-spanning segment. The segment at residues 260-291 (ALESIYFVVVTLTTVGFGDFVAGGNAGINYRE) is an intramembrane region (pore-forming). Residues threonine 273, valine 274, glycine 275, and phenylalanine 276 each coordinate K(+). The interval 273 to 278 (TVGFGD) is selectivity filter 2. Residues 296–316 (LVWFWILVGLAYFAAVLSMIG) traverse the membrane as a helical segment. At 317-535 (DWLRVLSKKT…ENNSLLEDRN (219 aa)) the chain is on the cytoplasmic side. Disordered stretches follow at residues 410–438 (QESINNRPNNLRLKGPEQLTKHGQGASED) and 510–535 (EMENGMVPTDTKDQGLENNSLLEDRN). The span at 525-535 (LENNSLLEDRN) shows a compositional bias: polar residues.

As to quaternary structure, homodimer; disulfide-linked. Forms heterodimers with other 2-pore domain K(+) channel subunits, such as KCNK2, KCNK4 and KCNK18. Detected in dorsal root ganglia (DRG) neurons (at protein level).

The protein localises to the cell membrane. The catalysed reaction is K(+)(in) = K(+)(out). It carries out the reaction Rb(+)(in) = Rb(+)(out). It catalyses the reaction Cs(+)(in) = Cs(+)(out). Its activity is regulated as follows. Activated by stimuli such as mechanical stretch, acidic pH and polyunsaturated free fatty acids. Activated by a dihydroacridine analog, ML67-33. Inhibited by polycationic dye ruthenium red. Selectively activated by T2A3 (2-[(4-chloro-3-methylphenyl)amino] benzoic acid). K(+) channel that conducts voltage-dependent outward rectifying currents upon membrane depolarization. Voltage sensing is coupled to K(+) electrochemical gradient in an 'ion flux gating' mode where outward but not inward ion flow opens the gate. Converts to voltage-independent 'leak' conductance mode upon stimulation by various stimuli including mechanical membrane stretch, acidic pH, heat and lipids. Homo- and heterodimerizes to form functional channels with distinct regulatory and gating properties. In trigeminal ganglia sensory neurons, the heterodimer of KCNK10/TREK-2 and KCNK18/TRESK inhibits neuronal firing and neurogenic inflammation by stabilizing the resting membrane potential at K(+) equilibrium potential as well as by regulating the threshold of action potentials and the spike frequency. Permeable to other monovalent ions such as Rb(+) and Cs(+). This is Potassium channel subfamily K member 10 from Mus musculus (Mouse).